A 271-amino-acid polypeptide reads, in one-letter code: Putative hydro-lyase jk0403 (271 aa).

Belongs to the D-glutamate cyclase family.

This Corynebacterium jeikeium (strain K411) protein is Putative hydro-lyase jk0403.